A 216-amino-acid chain; its full sequence is GTPase IMAP family member GIMD1 (216 aa).

The AIG1-type G domain occupies 5–216; the sequence is KMTINLALFG…ENCYQVLTFK (212 aa). GTP-binding positions include 14-22, serine 35, and 147-149; these read GMTQSGKSS and HAE.

The protein belongs to the TRAFAC class TrmE-Era-EngA-EngB-Septin-like GTPase superfamily. AIG1/Toc34/Toc159-like paraseptin GTPase family. IAN subfamily.

This chain is GTPase IMAP family member GIMD1 (GIMD1), found in Bos taurus (Bovine).